A 567-amino-acid chain; its full sequence is Urease subunit alpha (567 aa).

A Urease domain is found at 129–567 (GGIDTHIHFI…LPMAQRYFLF (439 aa)). 3 residues coordinate Ni(2+): histidine 134, histidine 136, and lysine 217. N6-carboxylysine is present on lysine 217. Position 219 (histidine 219) interacts with substrate. Histidine 246 and histidine 272 together coordinate Ni(2+). Histidine 320 serves as the catalytic Proton donor. Aspartate 360 is a Ni(2+) binding site.

Belongs to the metallo-dependent hydrolases superfamily. Urease alpha subunit family. Heterotrimer of UreA (gamma), UreB (beta) and UreC (alpha) subunits. Three heterotrimers associate to form the active enzyme. The cofactor is Ni cation. In terms of processing, carboxylation allows a single lysine to coordinate two nickel ions.

It localises to the cytoplasm. It carries out the reaction urea + 2 H2O + H(+) = hydrogencarbonate + 2 NH4(+). The protein operates within nitrogen metabolism; urea degradation; CO(2) and NH(3) from urea (urease route): step 1/1. This Delftia acidovorans (strain DSM 14801 / SPH-1) protein is Urease subunit alpha.